A 901-amino-acid polypeptide reads, in one-letter code: Protein translocase subunit SecA (901 aa).

Residues glutamine 87, 105 to 109, and aspartate 512 contribute to the ATP site; that span reads GEGKT. Positions 885, 887, 896, and 897 each coordinate Zn(2+).

This sequence belongs to the SecA family. In terms of assembly, monomer and homodimer. Part of the essential Sec protein translocation apparatus which comprises SecA, SecYEG and auxiliary proteins SecDF-YajC and YidC. Requires Zn(2+) as cofactor.

It is found in the cell inner membrane. The protein localises to the cytoplasm. It carries out the reaction ATP + H2O + cellular proteinSide 1 = ADP + phosphate + cellular proteinSide 2.. Its function is as follows. Part of the Sec protein translocase complex. Interacts with the SecYEG preprotein conducting channel. Has a central role in coupling the hydrolysis of ATP to the transfer of proteins into and across the cell membrane, serving both as a receptor for the preprotein-SecB complex and as an ATP-driven molecular motor driving the stepwise translocation of polypeptide chains across the membrane. The chain is Protein translocase subunit SecA from Salmonella typhi.